We begin with the raw amino-acid sequence, 418 residues long: Serine/threonine transporter SstT (418 aa).

Transmembrane regions (helical) follow at residues Ser16–Pro36, Leu45–Val65, Leu83–Phe103, Ala142–Leu162, Pro192–Leu212, Leu218–Phe238, Val289–Leu309, Leu317–Ala337, and Val364–Thr384.

Belongs to the dicarboxylate/amino acid:cation symporter (DAACS) (TC 2.A.23) family.

The protein resides in the cell inner membrane. The catalysed reaction is L-serine(in) + Na(+)(in) = L-serine(out) + Na(+)(out). It catalyses the reaction L-threonine(in) + Na(+)(in) = L-threonine(out) + Na(+)(out). Its function is as follows. Involved in the import of serine and threonine into the cell, with the concomitant import of sodium (symport system). This chain is Serine/threonine transporter SstT, found in Tolumonas auensis (strain DSM 9187 / NBRC 110442 / TA 4).